We begin with the raw amino-acid sequence, 327 residues long: Lipoyl synthase (327 aa).

Residues cysteine 72, cysteine 77, cysteine 83, cysteine 98, cysteine 102, cysteine 105, and serine 313 each contribute to the [4Fe-4S] cluster site. One can recognise a Radical SAM core domain in the interval 83–302 (CWSHGTATIM…RKVGLEKGFL (220 aa)).

The protein belongs to the radical SAM superfamily. Lipoyl synthase family. [4Fe-4S] cluster is required as a cofactor.

The protein resides in the cytoplasm. The catalysed reaction is [[Fe-S] cluster scaffold protein carrying a second [4Fe-4S](2+) cluster] + N(6)-octanoyl-L-lysyl-[protein] + 2 oxidized [2Fe-2S]-[ferredoxin] + 2 S-adenosyl-L-methionine + 4 H(+) = [[Fe-S] cluster scaffold protein] + N(6)-[(R)-dihydrolipoyl]-L-lysyl-[protein] + 4 Fe(3+) + 2 hydrogen sulfide + 2 5'-deoxyadenosine + 2 L-methionine + 2 reduced [2Fe-2S]-[ferredoxin]. Its pathway is protein modification; protein lipoylation via endogenous pathway; protein N(6)-(lipoyl)lysine from octanoyl-[acyl-carrier-protein]: step 2/2. Its function is as follows. Catalyzes the radical-mediated insertion of two sulfur atoms into the C-6 and C-8 positions of the octanoyl moiety bound to the lipoyl domains of lipoate-dependent enzymes, thereby converting the octanoylated domains into lipoylated derivatives. This chain is Lipoyl synthase, found in Francisella tularensis subsp. holarctica (strain FTNF002-00 / FTA).